We begin with the raw amino-acid sequence, 132 residues long: uncharacterized protein (132 aa).

Transmembrane regions (helical) follow at residues 19–39 (FTWI…FIFL), 58–78 (IGLR…VAVM), and 93–113 (LIAY…CAAL).

This sequence belongs to the bacteriophage holin family. Cp-1 holin subfamily.

Its subcellular location is the cell membrane. This is an uncharacterized protein from Clostridium perfringens.